Here is a 194-residue protein sequence, read N- to C-terminus: ATP-dependent Clp protease proteolytic subunit (194 aa).

Catalysis depends on Ser-98, which acts as the Nucleophile. His-123 is an active-site residue.

It belongs to the peptidase S14 family. In terms of assembly, fourteen ClpP subunits assemble into 2 heptameric rings which stack back to back to give a disk-like structure with a central cavity, resembling the structure of eukaryotic proteasomes.

It localises to the cytoplasm. It carries out the reaction Hydrolysis of proteins to small peptides in the presence of ATP and magnesium. alpha-casein is the usual test substrate. In the absence of ATP, only oligopeptides shorter than five residues are hydrolyzed (such as succinyl-Leu-Tyr-|-NHMec, and Leu-Tyr-Leu-|-Tyr-Trp, in which cleavage of the -Tyr-|-Leu- and -Tyr-|-Trp bonds also occurs).. Its function is as follows. Cleaves peptides in various proteins in a process that requires ATP hydrolysis. Has a chymotrypsin-like activity. Plays a major role in the degradation of misfolded proteins. The sequence is that of ATP-dependent Clp protease proteolytic subunit from Staphylococcus epidermidis (strain ATCC 35984 / DSM 28319 / BCRC 17069 / CCUG 31568 / BM 3577 / RP62A).